We begin with the raw amino-acid sequence, 190 residues long: Potassium-transporting ATPase KdpC subunit (190 aa).

The helical transmembrane segment at 13 to 33 (VGFLLLTLVCGVIYPGVVTII) threads the bilayer.

Belongs to the KdpC family. As to quaternary structure, the system is composed of three essential subunits: KdpA, KdpB and KdpC.

The protein localises to the cell membrane. Functionally, part of the high-affinity ATP-driven potassium transport (or Kdp) system, which catalyzes the hydrolysis of ATP coupled with the electrogenic transport of potassium into the cytoplasm. This subunit acts as a catalytic chaperone that increases the ATP-binding affinity of the ATP-hydrolyzing subunit KdpB by the formation of a transient KdpB/KdpC/ATP ternary complex. This is Potassium-transporting ATPase KdpC subunit from Listeria innocua serovar 6a (strain ATCC BAA-680 / CLIP 11262).